Consider the following 140-residue polypeptide: Nucleoside diphosphate kinase (140 aa).

6 residues coordinate ATP: K11, F59, R87, T93, R104, and N114. The active-site Pros-phosphohistidine intermediate is H117.

Belongs to the NDK family. Homotetramer. Mg(2+) is required as a cofactor.

The protein localises to the cytoplasm. The catalysed reaction is a 2'-deoxyribonucleoside 5'-diphosphate + ATP = a 2'-deoxyribonucleoside 5'-triphosphate + ADP. It carries out the reaction a ribonucleoside 5'-diphosphate + ATP = a ribonucleoside 5'-triphosphate + ADP. Major role in the synthesis of nucleoside triphosphates other than ATP. The ATP gamma phosphate is transferred to the NDP beta phosphate via a ping-pong mechanism, using a phosphorylated active-site intermediate. This is Nucleoside diphosphate kinase from Francisella tularensis subsp. mediasiatica (strain FSC147).